The chain runs to 212 residues: MLEIFDVSFSLMSNNKLDEVFTLRKDTFKDRLDWAVNCINGMEFDEYDNEHTTYLLGVKEGKVICSVRFIEIKYPNMITGTFYSYFDNLKIPEGNYIESSRFFVDRDRVRNLIGTRNPACVTLFLAMINYARKYHYDGILTIVSHPMLTLLKRSGWRISIIQQGLSEKQERIYLLHLPTDDDSRHALIERITQMTQAESEQLKTLPLLVPLA.

Belongs to the autoinducer synthase family.

It carries out the reaction a fatty acyl-[ACP] + S-adenosyl-L-methionine = an N-acyl-L-homoserine lactone + S-methyl-5'-thioadenosine + holo-[ACP] + H(+). Its function is as follows. Required for the synthesis of OHHL (N-(3-oxohexanoyl)-L-homoserine lactone), an autoinducer molecule which binds to the EchR transcriptional regulator. This Dickeya chrysanthemi (Pectobacterium chrysanthemi) protein is Acyl-homoserine-lactone synthase (echI).